Reading from the N-terminus, the 219-residue chain is Glutamine transport system permease protein GlnP (219 aa).

Over 1–22 (MQFDWSAIWPAIPLLIEGAKMT) the chain is Periplasmic. The 191-residue stretch at 19 to 209 (AKMTLWISVL…IITLVLSFIL (191 aa)) folds into the ABC transmembrane type-1 domain. The chain crosses the membrane as a helical span at residues 23 to 43 (LWISVLGLAGGLVIGLLAGFA). The Cytoplasmic segment spans residues 44-53 (RTFGGWIANH). The chain crosses the membrane as a helical span at residues 54-74 (VALVFIEVIRGTPIVVQVMFI). At 75-88 (YFALPMAFNDLRID) the chain is on the periplasmic side. The chain crosses the membrane as a helical span at residues 89-109 (PFTAAVVTIMINSGAYIAEIT). The Cytoplasmic segment spans residues 110–150 (RGAVLSIHKGFREAGLALGLSRWETIRYVILPLALRRMLPP). A helical membrane pass occupies residues 151 to 171 (LGNQWIISIKDTSLFIVIGVA). The Periplasmic portion of the chain corresponds to 172–187 (ELTRQGQEIIAGNFRA). Residues 188–208 (LEIWSAVAVFYLIITLVLSFI) form a helical membrane-spanning segment. Topologically, residues 209–219 (LRRLERRMKIL) are cytoplasmic.

This sequence belongs to the binding-protein-dependent transport system permease family. HisMQ subfamily.

It is found in the cell inner membrane. In terms of biological role, part of the binding-protein-dependent transport system for glutamine; probably responsible for the translocation of the substrate across the membrane. This is Glutamine transport system permease protein GlnP (glnP) from Escherichia coli O6:H1 (strain CFT073 / ATCC 700928 / UPEC).